The sequence spans 1061 residues: MNKLDYPRRNGTHKVRITILCARNLARKDLFRLPDPFAKVQVDGTGQVYSTEISKSSLDPKWNAHYDLFLGIGDAITITVWNQRKIHKGSGFLGCVRIPAFNIQSLKGAGFQRLDLGKLSPDDDELVRGQIIISLLSKDGPSSGNPLAIVGPSGDVRGPSEDDSSEDSLPEGWEERRTDNGRVYYVNHATKSTQWDRPRQPGVVGSSHATSPQQRHNTHNGNSGDRQAPAGPTRSTTCTNLMNNGHRSRDLSVTASDERRHSTEILSSVGKENTSPTTPVSATTTPGKKTSSSNSSSAGGRTLEQRPTNEPATPTSSTTSASVRLHSNDNHVKTPKHQTNGHAPPESTPTSPTGQQNYVNGNAQNGSTSGNGSGQAAQPQSASNGWTQEDAATTTSPSTTTSPPRHSQSPPTPNISPPASVTPSANGNVHSPNANSTPAGSGGGSRSYTAATPGQRSQRRSSRQQGEESSTRRRSSRGTRNGGTSGGGGGGGSGQRYASAAIAAANQAARPFLDLPPGYEMRTTQQGQVYFYHIPTGVSTWHDPRIPRDFDTQHLTLDAIGPLPSGWEQRKTASGRVYFVDHNNRTTQFTDPRLSGSILQMIRRGTVPPTSAANAGTPAPPSATPATPSAAAAVPPQATPASNATPTTLTTTTNPPHRIVPDLPQGLLEGADLLPKYRRDLVGKLRALRTELQTMQPQSGHCRLEVSRNEIFEESYRLIMKMRAKDMRKRLMVKFKGEEGLDYGGVAREWLHLLSREMLNPQYGLFQYSRDDHYTLQINPDSGVNPDHLSYFHFVGRTLGIAVFHGHCLDGGFTTPFYKQLLNKPITLGDIEGVDPDLHRSLTWMLESNISGIIESTFSVENNSFGALVVHELKPGGASIPVTEENKREYVKLYVNYRFMRGIEQQFLALQKGFCELIPSHLLRPFDERELELVIGGISSIDVNDWRNNTRLKHCTNETTQVLWFWQVVESYSSEMRARLLQFVTGSSRVPLQGFRALQGSTGAVGPRLFTIHLTADVPTQNLPKAHTCFNRIDLPPYETYQLLCDKLTQAVEETCGFAVE.

The region spanning 1-116 (MNKLDYPRRN…KGAGFQRLDL (116 aa)) is the C2 domain. Disordered regions lie at residues 143 to 176 (SGNP…WEER) and 188 to 496 (HATK…SGQR). In terms of domain architecture, WW 1 spans 167-200 (DSLPEGWEERRTDNGRVYYVNHATKSTQWDRPRQ). Composition is skewed to polar residues over residues 207–225 (SHAT…NSGD) and 233–255 (TRST…SVTA). Residue Ser-262 is modified to Phosphoserine. Polar residues predominate over residues 264-273 (EILSSVGKEN). Composition is skewed to low complexity over residues 274 to 300 (TSPT…SAGG) and 311 to 322 (PATPTSSTTSAS). Polar residues predominate over residues 348–359 (TPTSPTGQQNYV). Positions 360-378 (NGNAQNGSTSGNGSGQAAQ) are enriched in low complexity. Residues 379–392 (PQSASNGWTQEDAA) are compositionally biased toward polar residues. Residues 393–409 (TTTSPSTTTSPPRHSQS) show a composition bias toward low complexity. Phosphothreonine is present on Thr-412. A Phosphoserine modification is found at Ser-416. Positions 417–439 (PPASVTPSANGNVHSPNANSTPA) are enriched in polar residues. Over residues 480–494 (RNGGTSGGGGGGGSG) the composition is skewed to gly residues. WW domains are found at residues 513–546 (LDLP…DPRI) and 561–594 (GPLP…DPRL). Positions 513–602 (LDLPPGYEMR…RLSGSILQMI (90 aa)) are interaction with MAD. 2 stretches are compositionally biased toward low complexity: residues 608-617 (PPTSAANAGT) and 624-656 (TPAT…TNPP). A disordered region spans residues 608 to 661 (PPTSAANAGTPAPPSATPATPSAAAAVPPQATPASNATPTTLTTTTNPPHRIVP). Residues 723-1061 (RAKDMRKRLM…VEETCGFAVE (339 aa)) form the HECT domain. Cys-1029 acts as the Glycyl thioester intermediate in catalysis.

In terms of assembly, interacts with phosphorylated MAD.

It carries out the reaction S-ubiquitinyl-[E2 ubiquitin-conjugating enzyme]-L-cysteine + [acceptor protein]-L-lysine = [E2 ubiquitin-conjugating enzyme]-L-cysteine + N(6)-ubiquitinyl-[acceptor protein]-L-lysine.. It participates in protein modification; protein ubiquitination. E3 ubiquitin-protein ligase which accepts ubiquitin from an E2 ubiquitin-conjugating enzyme in the form of a thioester and then directly transfers the ubiquitin to targeted substrates. Down-regulates Dpp signaling after gastrulation by promoting MAD ubiquitination and subsequent degradation. In Drosophila melanogaster (Fruit fly), this protein is E3 ubiquitin-protein ligase Smurf1.